A 777-amino-acid chain; its full sequence is Dynamin-like protein ARC5 (777 aa).

The Dynamin-type G domain occupies Pro-45–Pro-343. Positions Gly-55–Ser-62 are G1 motif. Gly-55–Ser-62 serves as a coordination point for GTP. Positions Lys-81–Arg-83 are G2 motif. Positions Asp-160 to Gly-163 are G3 motif. GTP is bound by residues Asp-160–Leu-164 and Thr-231–Asp-234. Positions Thr-231 to Asp-234 are G4 motif. Positions Ser-265–Phe-268 are G5 motif. Coiled coils occupy residues Glu-300–Arg-320 and Asn-728–Glu-765.

The protein belongs to the TRAFAC class dynamin-like GTPase superfamily. Dynamin/Fzo/YdjA family. In terms of assembly, forms a homodimer and heterodimers with DRP3A and DRP3B on peroxisomes. Also interacts with FIS1A (but not FIS1B) and PEX11 proteins (PEX11A, PEX11B, PEX11C, PEX11D and PEX11E) on peroxisomes. Interacts with PDV1 and PDV2. In terms of processing, stabilized at the plastid outer envelope membranes (OEMs) in the constriction site when in complex with GTP, but destabilized after conversion of GTP into GDP leading to turnover with a cytosolic pool.

It is found in the cytoplasm. The protein localises to the plastid. It localises to the chloroplast outer membrane. Its subcellular location is the peroxisome. The protein resides in the cytosol. It catalyses the reaction GTP + H2O = GDP + phosphate + H(+). GTPase activity is repressed by PDV2 thus increasing stability at the plastid outer envelope membranes (OEMs) periphery. Mechanochemical GTPase component of both plastid and peroxisome division machinery. Required for the last steps of plastid division specifically in mesophyll-cell, when the narrow isthmus breaks, facilitating the separation of the daughter plastids. Necessary for peroxisome activities. Seems to influence stromule (stroma-filled tubular extensions of the plastid envelope membrane) length and frequency. The chain is Dynamin-like protein ARC5 from Arabidopsis thaliana (Mouse-ear cress).